The sequence spans 503 residues: Lysine--tRNA ligase (503 aa).

Residues E414 and E421 each contribute to the Mg(2+) site.

It belongs to the class-II aminoacyl-tRNA synthetase family. In terms of assembly, homodimer. Requires Mg(2+) as cofactor.

Its subcellular location is the cytoplasm. The enzyme catalyses tRNA(Lys) + L-lysine + ATP = L-lysyl-tRNA(Lys) + AMP + diphosphate. This is Lysine--tRNA ligase from Neisseria meningitidis serogroup B (strain ATCC BAA-335 / MC58).